Consider the following 122-residue polypeptide: Large ribosomal subunit protein uL18 (122 aa).

The segment at 1-24 is disordered; it reads MLKKADKNANRLQRHKRVRRKISG. Residues 12–22 show a composition bias toward basic residues; that stretch reads LQRHKRVRRKI.

The protein belongs to the universal ribosomal protein uL18 family. As to quaternary structure, part of the 50S ribosomal subunit; part of the 5S rRNA/L5/L18/L25 subcomplex. Contacts the 5S and 23S rRNAs.

In terms of biological role, this is one of the proteins that bind and probably mediate the attachment of the 5S RNA into the large ribosomal subunit, where it forms part of the central protuberance. In Clostridioides difficile (strain 630) (Peptoclostridium difficile), this protein is Large ribosomal subunit protein uL18.